The chain runs to 1214 residues: Formin-D (1214 aa).

The 370-residue stretch at 10-379 (KKEESPQSID…KMNNGESYLD (370 aa)) folds into the GBD/FH3 domain. Positions 401-448 (SGEKAVLIQKEIEDLKKQKKRDQDKLAEKDKLLTKLAKRMRKMEEAIK) form a coiled coil. The 88-residue stretch at 457–544 (NNQIEIESPP…GSGDGIPLPP (88 aa)) folds into the FH1 domain. 2 stretches are compositionally biased toward polar residues: residues 462–479 (IESP…TTPG) and 518–534 (LDTT…QTEA). Disordered regions lie at residues 462–490 (IESP…TSPV), 507–569 (APNG…SRPP), 868–948 (PKSV…PLKD), 1026–1045 (DKST…IKKS), 1054–1089 (LKKI…DDED), and 1133–1214 (MNLQ…EGEN). The span at 541–554 (PLPPGAPPPPPPPG) shows a compositional bias: pro residues. The FH2 domain occupies 562–1037 (PQLCSRPPSI…STQRKNEKER (476 aa)). Positions 868–877 (PKSVEPKPDD) are enriched in basic and acidic residues. Over residues 930–940 (QVNTNSTSDSK) the composition is skewed to polar residues. Positions 1019–1056 (EIEKSIKDKSTQRKNEKERKEMEIKKSKLEMIHSKLKK) form a coiled coil. Over residues 1059 to 1071 (SPSSSNRILASNE) the composition is skewed to polar residues. In terms of domain architecture, DAD spans 1065-1095 (RILASNESSPTSSTSSVVHQHDDEDEETIKE). Low complexity predominate over residues 1161–1171 (SSTYSSISSIY). The segment covering 1174–1214 (EPLDMSDQEDEDEEEEEDEEEEEEEEEGDDDNDNDEEEGEN) has biased composition (acidic residues). Positions 1176-1207 (LDMSDQEDEDEEEEEDEEEEEEEEEGDDDNDN) form a coiled coil.

The protein belongs to the formin homology family. Diaphanous subfamily. As to quaternary structure, interacts (via GBD/FH3 domain) with activated Rho-GTPases.

In terms of biological role, formins play an important role in the nucleation of actin and the formation of linear actin filaments. In Dictyostelium discoideum (Social amoeba), this protein is Formin-D (forD).